A 156-amino-acid chain; its full sequence is Rhodanese-like domain-containing protein 17 (156 aa).

The Rhodanese domain maps to 44-146 (LDSGYTFLDV…WVNKRFPVKV (103 aa)). Cysteine 106 acts as the Cysteine persulfide intermediate in catalysis.

This chain is Rhodanese-like domain-containing protein 17 (STR17), found in Arabidopsis thaliana (Mouse-ear cress).